The chain runs to 131 residues: Holo-[acyl-carrier-protein] synthase (131 aa).

Mg(2+)-binding residues include aspartate 8 and glutamate 59.

It belongs to the P-Pant transferase superfamily. AcpS family. Requires Mg(2+) as cofactor.

The protein resides in the cytoplasm. The catalysed reaction is apo-[ACP] + CoA = holo-[ACP] + adenosine 3',5'-bisphosphate + H(+). Functionally, transfers the 4'-phosphopantetheine moiety from coenzyme A to a Ser of acyl-carrier-protein. The sequence is that of Holo-[acyl-carrier-protein] synthase from Rickettsia africae (strain ESF-5).